The following is a 291-amino-acid chain: T-cell leukemia homeobox protein 3 (291 aa).

The tract at residues 1 to 56 is disordered; it reads MEAPASAQTPHPHEPISFGIDQILNSPDQDSAPAPRGPDGASYLGGPPGGRPGATY. The homeobox DNA-binding region spans 166-225; that stretch reads RKKPRTSFSRVQICELEKRFHRQKYLASAERAALAKSLKMTDAQVKTWFQNRRTKWRRQT.

The protein resides in the nucleus. The sequence is that of T-cell leukemia homeobox protein 3 (TLX3) from Homo sapiens (Human).